The chain runs to 183 residues: NRR repressor homolog 1 (183 aa).

Disordered stretches follow at residues 1-40 and 66-183; these read MEGV…VVGG and NGEE…PTDQ. The span at 31-40 shows a compositional bias: acidic residues; the sequence is EEEEGAVVGG. A compositionally biased stretch (gly residues) spans 70–79; that stretch reads GAAGGDGDGA. The span at 101 to 115 shows a compositional bias: acidic residues; it reads FEFEEAAAGAGDDDA. The span at 135–145 shows a compositional bias: basic and acidic residues; sequence AVEKRRTEKEA. Positions 150–161 are enriched in acidic residues; sequence AEDDDDEQEGGE. Residues 163–183 show a composition bias toward basic and acidic residues; that stretch reads VEGKEEHRPGRRVEAHGPTDQ.

Belongs to the NPR1-interactor family. In terms of assembly, interacts with NPR1/NH1. Interacts with NPR3/NH3.

Its subcellular location is the nucleus. Binds to and represses NPR1/NH1-mediated transcriptional activation of LG2 in vitro. The protein is NRR repressor homolog 1 of Oryza sativa subsp. japonica (Rice).